The primary structure comprises 667 residues: Transketolase 2 (667 aa).

Residue His-25 coordinates substrate. Thiamine diphosphate is bound by residues His-65 and 113–115 (GPL). A Mg(2+)-binding site is contributed by Asp-154. Gly-155 and Asn-184 together coordinate thiamine diphosphate. Mg(2+) contacts are provided by Asn-184 and Ile-186. Residue His-260 coordinates substrate. Thiamine diphosphate is bound at residue His-260. The residue at position 342 (Lys-342) is an N6-acetyllysine. 2 residues coordinate substrate: Arg-357 and Ser-384. Catalysis depends on Glu-410, which acts as the Proton donor. Phe-436 is a binding site for thiamine diphosphate. Positions 460, 468, and 519 each coordinate substrate.

This sequence belongs to the transketolase family. As to quaternary structure, homodimer. Mg(2+) serves as cofactor. It depends on Ca(2+) as a cofactor. The cofactor is Mn(2+). Co(2+) is required as a cofactor. Requires thiamine diphosphate as cofactor.

The enzyme catalyses D-sedoheptulose 7-phosphate + D-glyceraldehyde 3-phosphate = aldehydo-D-ribose 5-phosphate + D-xylulose 5-phosphate. Its function is as follows. Catalyzes the reversible transfer of a two-carbon ketol group from sedoheptulose-7-phosphate to glyceraldehyde-3-phosphate, producing xylulose-5-phosphate and ribose-5-phosphate. Catalyzes the transfer of a two-carbon ketol group from a ketose donor to an aldose acceptor, via a covalent intermediate with the cofactor thiamine pyrophosphate. The protein is Transketolase 2 of Escherichia coli (strain K12).